Reading from the N-terminus, the 274-residue chain is Formamidopyrimidine-DNA glycosylase (274 aa).

Pro-2 serves as the catalytic Schiff-base intermediate with DNA. Glu-3 (proton donor) is an active-site residue. The active-site Proton donor; for beta-elimination activity is Lys-58. DNA is bound by residues His-91, Arg-110, and Lys-152. An FPG-type zinc finger spans residues 237 to 271; sequence KVYGRKNLPCLVCENKIETVVIAGRHSAFCPHCQP. The active-site Proton donor; for delta-elimination activity is Arg-261.

It belongs to the FPG family. In terms of assembly, monomer. Zn(2+) serves as cofactor.

It carries out the reaction Hydrolysis of DNA containing ring-opened 7-methylguanine residues, releasing 2,6-diamino-4-hydroxy-5-(N-methyl)formamidopyrimidine.. It catalyses the reaction 2'-deoxyribonucleotide-(2'-deoxyribose 5'-phosphate)-2'-deoxyribonucleotide-DNA = a 3'-end 2'-deoxyribonucleotide-(2,3-dehydro-2,3-deoxyribose 5'-phosphate)-DNA + a 5'-end 5'-phospho-2'-deoxyribonucleoside-DNA + H(+). Involved in base excision repair of DNA damaged by oxidation or by mutagenic agents. Acts as a DNA glycosylase that recognizes and removes damaged bases. Has a preference for oxidized purines, such as 7,8-dihydro-8-oxoguanine (8-oxoG). Has AP (apurinic/apyrimidinic) lyase activity and introduces nicks in the DNA strand. Cleaves the DNA backbone by beta-delta elimination to generate a single-strand break at the site of the removed base with both 3'- and 5'-phosphates. This Legionella pneumophila subsp. pneumophila (strain Philadelphia 1 / ATCC 33152 / DSM 7513) protein is Formamidopyrimidine-DNA glycosylase.